The primary structure comprises 358 residues: tRNA N6-adenosine threonylcarbamoyltransferase (358 aa).

The Fe cation site is built by His122 and His126. Substrate-binding positions include 145–149 (LVSGG), Asp178, Gly191, and Asn287. Asp315 serves as a coordination point for Fe cation.

Belongs to the KAE1 / TsaD family. Fe(2+) is required as a cofactor.

The protein localises to the cytoplasm. The enzyme catalyses L-threonylcarbamoyladenylate + adenosine(37) in tRNA = N(6)-L-threonylcarbamoyladenosine(37) in tRNA + AMP + H(+). Required for the formation of a threonylcarbamoyl group on adenosine at position 37 (t(6)A37) in tRNAs that read codons beginning with adenine. Is involved in the transfer of the threonylcarbamoyl moiety of threonylcarbamoyl-AMP (TC-AMP) to the N6 group of A37, together with TsaE and TsaB. TsaD likely plays a direct catalytic role in this reaction. In Hydrogenovibrio crunogenus (strain DSM 25203 / XCL-2) (Thiomicrospira crunogena), this protein is tRNA N6-adenosine threonylcarbamoyltransferase.